The primary structure comprises 399 residues: tRNA-dihydrouridine(16/17) synthase [NAD(P)(+)] (399 aa).

Residues 24–26 (PMV) and Gln-80 each bind FMN. Cys-109 (proton donor) is an active-site residue. FMN is bound by residues Lys-148, His-176, 211–213 (NGN), and 235–236 (AE).

The protein belongs to the Dus family. Dus1 subfamily. It depends on FMN as a cofactor.

It localises to the nucleus. Its subcellular location is the mitochondrion. It catalyses the reaction 5,6-dihydrouridine(16) in tRNA + NADP(+) = uridine(16) in tRNA + NADPH + H(+). The catalysed reaction is 5,6-dihydrouridine(16) in tRNA + NAD(+) = uridine(16) in tRNA + NADH + H(+). It carries out the reaction 5,6-dihydrouridine(17) in tRNA + NAD(+) = uridine(17) in tRNA + NADH + H(+). The enzyme catalyses 5,6-dihydrouridine(17) in tRNA + NADP(+) = uridine(17) in tRNA + NADPH + H(+). It catalyses the reaction a 5,6-dihydrouridine in mRNA + NAD(+) = a uridine in mRNA + NADH + H(+). The catalysed reaction is a 5,6-dihydrouridine in mRNA + NADP(+) = a uridine in mRNA + NADPH + H(+). Its function is as follows. Catalyzes the synthesis of dihydrouridine, a modified base found in the D-loop of most tRNAs. Also able to mediate dihydrouridylation of some mRNAs, thereby affecting their translation. The polypeptide is tRNA-dihydrouridine(16/17) synthase [NAD(P)(+)] (Schizosaccharomyces pombe (strain 972 / ATCC 24843) (Fission yeast)).